A 307-amino-acid polypeptide reads, in one-letter code: Probable thioesterase KK1J (307 aa).

It belongs to the AMT4 thioesterase family.

It functions in the pathway secondary metabolite biosynthesis. Its function is as follows. Probable thioesterase; part of the gene cluster that mediates the biosynthesis of KK-1, a novel cyclic depsipeptide with 10 residues which is a promising active compound with high activity against many plant pathogens, especially Botrytis cinerea. Within the pathway, kk1J is not essential for the biosynthesis of KK-1, but plays a role for efficient production via correction of peptide chain synthesis by kk1B. The nonribosomal peptide synthetase (NRPS) kk1B catalyzes the elongation and cyclization of the decapeptide chain composed of 1 D-lactic acid residue (D-Lac), 1 pipecolic acid residue (Pip), 1 aspartic acid residue (Asp), 1 isoleucine residue (Ile), 1 glycine residue (Gly), 1 tyrosine residue (Tyr) and 4 valine residues (Val). The Asp, Ile and 3 Val residues are N-methylated by the 5 methyltransferase domains from the NRPS (found in modules 3, 5, 6, 7 and 9), whereas the Tyr residue is O-methylated by the cluster encoded O-methyltransferase kk1A. The thioesterase kk1J is likely to be involved in the corrective mechanism of peptide chain synthesis. The D-lactate dehydrogenase kk1H is involved in the synthesis of D-lactic acid from pyruvic acid, which is recognized by the A domain of the first kk1B module. The pyrroline-5-carboxylate reductase kk1I is involved in the synthesis of the L-pipecolic acid residue of KK-1 from delta-1-pyrroline-5-carboxylate (P5C), a metabolic intermediate of lysine. It still is unclear how kk1C and kk1D are involved in the production of KK-1. In Curvularia clavata, this protein is Probable thioesterase KK1J.